A 32-amino-acid polypeptide reads, in one-letter code: MSDINATRLPIIGILLPPCIGDDVTLLLTRGE.

Positions 1–10 (MSDINATRLP) are excised as a propeptide. The segment at residues 11–18 (IIGILLPP) is a cross-link (cyclopeptide (Ile-Pro)). The propeptide occupies 19-32 (CIGDDVTLLLTRGE).

Belongs to the MSDIN fungal toxin family. Post-translationally, processed by the macrocyclase-peptidase enzyme POPB to yield a toxic cyclic octapeptide. POPB first removes 10 residues from the N-terminus. Conformational trapping of the remaining peptide forces the enzyme to release this intermediate rather than proceed to macrocyclization. The enzyme rebinds the remaining peptide in a different conformation and catalyzes macrocyclization of the N-terminal 8 residues.

Probable toxin that belongs to the MSDIN-like toxin family responsible for a large number of food poisoning cases and deaths. The polypeptide is MSDIN-like toxin proprotein a (Amanita phalloides (Death cap)).